The following is a 162-amino-acid chain: Small ribosomal subunit protein uS5 (162 aa).

Positions 7–70 (EEKMILIRRT…YARRNMVEVP (64 aa)) constitute an S5 DRBM domain.

This sequence belongs to the universal ribosomal protein uS5 family. As to quaternary structure, part of the 30S ribosomal subunit. Contacts proteins S4 and S8.

Its function is as follows. With S4 and S12 plays an important role in translational accuracy. Located at the back of the 30S subunit body where it stabilizes the conformation of the head with respect to the body. This chain is Small ribosomal subunit protein uS5 (rpsE), found in Thermus thermophilus (strain ATCC BAA-163 / DSM 7039 / HB27).